A 491-amino-acid polypeptide reads, in one-letter code: MDHTDNELQGTNSSGSLGGLDVRRRIPIKLISKQASKVKPAPRTQRTVSRMPAKAPQGDEEGFDYNEEQRYDCKGGELFGNQRRFPGHLFWDFKINILGEKDDTPVHFCDKCGLPIKVYGRMIPCKHVFCYDCAILHEKKGDKMCPGCSDPVQRIEQCTRGSLFMCSIVQGCKRTYLSQRDLQAHINHRHMRAGKPVTRASLENVHPPIAPPPTDIPDRFIMPPDKHHMSHIPPKQHIMMPPPPLQHVPHEHYNQPHEDIRAPPAELSMAPPPPRSVSQETFRISTRKHSNLITVPIQDDSSSGAREPPPPAPAPAHHHPEYQGQPVVSHPHHIMPPQQHYAPPPPPPPPISHPMPHPPQAAGTPHLVYSQAPPPPMTSAPPPITPPPGHIIAQMPPYMNHPPPGPPPPQHGGPPVTAPPPHHYNPNSLPQFTEDQGTLSPPFTQPGGMSPGIWPAPRGPPPPPRMQGPPSQTPLPGPHHPDQTRYRPYYQ.

Disordered stretches follow at residues 1 to 20 and 33 to 61; these read MDHT…LGGL and KQAS…GDEE. The RING-type zinc-finger motif lies at 109–149; sequence CDKCGLPIKVYGRMIPCKHVFCYDCAILHEKKGDKMCPGCS. Positions 148-206 are HYB domain; that stretch reads CSDPVQRIEQCTRGSLFMCSIVQGCKRTYLSQRDLQAHINHRHMRAGKPVTRASLENVH. A C2H2-type zinc finger spans residues 164 to 190; that stretch reads FMCSIVQGCKRTYLSQRDLQAHINHRH. Serine 201, serine 285, and serine 290 each carry phosphoserine. The segment at 255-491 is disordered; the sequence is QPHEDIRAPP…DQTRYRPYYQ (237 aa). 3 stretches are compositionally biased toward pro residues: residues 342 to 359, 372 to 389, and 399 to 423; these read APPP…PHPP, APPP…PPPG, and MNHP…PPHH. The segment covering 427-442 has biased composition (polar residues); sequence NSLPQFTEDQGTLSPP. The segment covering 457–478 has biased composition (pro residues); sequence PRGPPPPPRMQGPPSQTPLPGP.

It belongs to the Hakai family. Homodimer. Interacts with tyrosine-phosphorylated SRC substrates. Component of the WMM complex, a N6-methyltransferase complex composed of a catalytic subcomplex, named MAC, and of an associated subcomplex, named MACOM. The MAC subcomplex is composed of METTL3 and METTL14. The MACOM subcomplex is composed of WTAP, ZC3H13, CBLL1/HAKAI, VIRMA, and, in some cases of RBM15 (RBM15 or RBM15B). Also a component of a MACOM-like complex, named WTAP complex, composed of WTAP, ZC3H13, CBLL1, VIRMA, RBM15, BCLAF1 and THRAP3. Post-translationally, phosphorylated on tyrosine residues. As to expression, detected in heart, brain, spleen, lung, liver, skeletal muscle, kidney and testis.

Its subcellular location is the nucleus speckle. The protein resides in the nucleus. The protein localises to the nucleoplasm. It is found in the cytoplasm. It catalyses the reaction S-ubiquitinyl-[E2 ubiquitin-conjugating enzyme]-L-cysteine + [acceptor protein]-L-lysine = [E2 ubiquitin-conjugating enzyme]-L-cysteine + N(6)-ubiquitinyl-[acceptor protein]-L-lysine.. It participates in protein modification; protein ubiquitination. Functionally, E3 ubiquitin-protein ligase that mediates ubiquitination of several tyrosine-phosphorylated Src substrates, including CDH1, CTTN and DOK1. Targets CDH1 for endocytosis and degradation. Associated component of the WMM complex, a complex that mediates N6-methyladenosine (m6A) methylation of RNAs, a modification that plays a role in the efficiency of mRNA splicing and RNA processing. Its function in the WMM complex is unknown. This Mus musculus (Mouse) protein is E3 ubiquitin-protein ligase Hakai.